The sequence spans 82 residues: UPF0512 protein P (82 aa).

The protein belongs to the UPF0512 family.

The sequence is that of UPF0512 protein P from Dictyostelium discoideum (Social amoeba).